The following is a 436-amino-acid chain: DEAD-box ATP-dependent RNA helicase CshB (436 aa).

Positions 4–32 (QTFTQYDFKPFLIDAVRELRFTEPTGIQQ) match the Q motif motif. The 175-residue stretch at 35 to 209 (FPVVKKGVSV…KKYMENPEHI (175 aa)) folds into the Helicase ATP-binding domain. 48-55 (SQTGSGKT) contributes to the ATP binding site. A DEAD box motif is present at residues 157-160 (DEAD). The region spanning 240 to 388 (MLLQFKPYLA…WADLGERRRR (149 aa)) is the Helicase C-terminal domain. A disordered region spans residues 385–436 (RRRRKSRKKPNDELDVMATKVIKKPKKVKPNYKRKLATERDKVKRKYSNKKR). Basic residues-rich tracts occupy residues 405–419 (VIKKPKKVKPNYKRK) and 427–436 (VKRKYSNKKR).

This sequence belongs to the DEAD box helicase family. CshB subfamily.

It localises to the cytoplasm. It catalyses the reaction ATP + H2O = ADP + phosphate + H(+). Functionally, probable DEAD-box RNA helicase. May work in conjunction with the cold shock proteins to ensure proper initiation of transcription at low and optimal temperatures. Unwinds dsRNA in both 5'- and 3'-directions and shows RNA-dependent ATPase activity. Probably has a somewhat redundant function with CshA, as cshA can partially complement the growth effects of a cshB deletion. In Bacillus cereus (strain ATCC 14579 / DSM 31 / CCUG 7414 / JCM 2152 / NBRC 15305 / NCIMB 9373 / NCTC 2599 / NRRL B-3711), this protein is DEAD-box ATP-dependent RNA helicase CshB.